The chain runs to 515 residues: Methionine--tRNA ligase (515 aa).

The short motif at 13–23 is the 'HIGH' region element; the sequence is AYPNGKPHIGH. Residues 300-304 carry the 'KMSKS' region motif; sequence KMSKS. ATP is bound at residue K303.

It belongs to the class-I aminoacyl-tRNA synthetase family. MetG type 2B subfamily. As to quaternary structure, monomer.

It localises to the cytoplasm. It catalyses the reaction tRNA(Met) + L-methionine + ATP = L-methionyl-tRNA(Met) + AMP + diphosphate. Its function is as follows. Is required not only for elongation of protein synthesis but also for the initiation of all mRNA translation through initiator tRNA(fMet) aminoacylation. The protein is Methionine--tRNA ligase of Brucella melitensis biotype 1 (strain ATCC 23456 / CCUG 17765 / NCTC 10094 / 16M).